Consider the following 2128-residue polypeptide: Non-reducing polyketide synthase albA (2128 aa).

The segment at 8–244 is N-terminal acylcarrier protein transacylase domain (SAT); it reads YLFGDQTSDI…VKAPIHGPYH (237 aa). The Ketosynthase family 3 (KS3) domain occupies 375-806; the sequence is NSKIAIIGMS…GGNTALLLED (432 aa). Active-site for beta-ketoacyl synthase activity residues include C547, H682, and H724. The interval 912–1232 is malonyl-CoA:ACP transacylase (MAT) domain; sequence FVFTGQGAQY…LASLHLAGID (321 aa). The active-site For acyl/malonyl transferase activity is the S1001. The N-terminal hotdog fold stretch occupies residues 1286–1425; sequence HEYLTTAAQK…CTVRFFDCAA (140 aa). Residues 1286-1598 enclose the PKS/mFAS DH domain; the sequence is HEYLTTAAQK…FQALSRKILD (313 aa). The interval 1290–1603 is product template (PT) domain; that stretch reads TTAAQKVIET…RKILDTVLPP (314 aa). H1326 (proton acceptor; for dehydratase activity) is an active-site residue. A C-terminal hotdog fold region spans residues 1452–1598; that stretch reads DAHRLGRGMV…FQALSRKILD (147 aa). Catalysis depends on D1511, which acts as the Proton donor; for dehydratase activity. A Carrier 1 domain is found at 1618-1695; that stretch reads PSAPSLVKRA…DFKQFLAPMS (78 aa). An O-(pantetheine 4'-phosphoryl)serine modification is found at S1655. Residues 1695 to 1740 form a disordered region; the sequence is SQGEASDGSTSDPESSSSFNGGSSTDESSAGSPVSSPPNEKVTQVE. The span at 1700-1723 shows a compositional bias: low complexity; sequence SDGSTSDPESSSSFNGGSSTDESS. Over residues 1724-1740 the composition is skewed to polar residues; that stretch reads AGSPVSSPPNEKVTQVE. Residues 1739–1816 enclose the Carrier 2 domain; that stretch reads VEQHATIKEI…DVEDALGLKP (78 aa). Residue S1776 is modified to O-(pantetheine 4'-phosphoryl)serine. Positions 1854 to 2126 are claisen cyclase domain; sequence SPHPRSTSIL…ELGSFIGNAM (273 aa). S1944 serves as the catalytic For Claisen cyclase activity.

It catalyses the reaction 6 malonyl-CoA + acetyl-CoA + 6 H(+) = naphtopyrone YWA1 + 6 CO2 + 7 CoA + H2O. It participates in secondary metabolite biosynthesis. Its function is as follows. Non-reducing polyketide synthase; part of the gene cluster that mediates the biosynthesis of aurasperone B, a dimeric gamma-naphthopyrone. The first step in the biosynthesis of aurasperone B is the production of gamma-naphthopyrone precursor YWA1 by the non-reducing polyketide synthase albA, via condensation of one acetyl-CoA starter unit with 6 malonyl-CoA units. YWA1 is then methylated by aunE at position C-6 to yield foncesin which is further methylated at position C-8 by aunD to produce fonsecin B. A key enzyme in the biosynthetic pathway is the cytochrome P450 monooxygenase aunB which catalyzes the oxidative dimerization of fonsecin B to aurasperone B. AunB also catalyzes the oxidative dimerization of rubrofusarin B into aurasperone A. The polypeptide is Non-reducing polyketide synthase albA (Aspergillus niger (strain ATCC 1015 / CBS 113.46 / FGSC A1144 / LSHB Ac4 / NCTC 3858a / NRRL 328 / USDA 3528.7)).